Here is a 327-residue protein sequence, read N- to C-terminus: GTPase Obg (327 aa).

Positions 1 to 159 (MKFVDSARIV…LKVDLELKLM (159 aa)) constitute an Obg domain. The disordered stretch occupies residues 120-145 (GGDGGRGNPHFTTSTRQAPRYAEPGG). An OBG-type G domain is found at 160 to 323 (ADVGLVGFPN…LRNALWNTIN (164 aa)). GTP is bound by residues 166 to 173 (GFPNAGKS), 191 to 195 (FTTLV), 213 to 216 (DIPG), 280 to 283 (TKMD), and 304 to 306 (SSI). 2 residues coordinate Mg(2+): S173 and T193.

It belongs to the TRAFAC class OBG-HflX-like GTPase superfamily. OBG GTPase family. As to quaternary structure, monomer. Mg(2+) serves as cofactor.

The protein resides in the cytoplasm. Its function is as follows. An essential GTPase which binds GTP, GDP and possibly (p)ppGpp with moderate affinity, with high nucleotide exchange rates and a fairly low GTP hydrolysis rate. Plays a role in control of the cell cycle, stress response, ribosome biogenesis and in those bacteria that undergo differentiation, in morphogenesis control. The protein is GTPase Obg of Prosthecochloris aestuarii (strain DSM 271 / SK 413).